Consider the following 299-residue polypeptide: Urease accessory protein UreD (299 aa).

The protein belongs to the UreD family. In terms of assembly, ureD, UreF and UreG form a complex that acts as a GTP-hydrolysis-dependent molecular chaperone, activating the urease apoprotein by helping to assemble the nickel containing metallocenter of UreC. The UreE protein probably delivers the nickel.

It is found in the cytoplasm. Its function is as follows. Required for maturation of urease via the functional incorporation of the urease nickel metallocenter. In Haloarcula marismortui (strain ATCC 43049 / DSM 3752 / JCM 8966 / VKM B-1809) (Halobacterium marismortui), this protein is Urease accessory protein UreD.